Reading from the N-terminus, the 238-residue chain is Uridylate kinase (238 aa).

An ATP-binding site is contributed by 13 to 16; that stretch reads KLSG. Gly53 contacts UMP. 2 residues coordinate ATP: Gly54 and Arg58. UMP is bound by residues Asp73 and 134-141; that span reads AGLPYFST. Residues Asn162, Tyr168, and Asp171 each coordinate ATP.

It belongs to the UMP kinase family. As to quaternary structure, homohexamer.

The protein localises to the cytoplasm. The enzyme catalyses UMP + ATP = UDP + ADP. It functions in the pathway pyrimidine metabolism; CTP biosynthesis via de novo pathway; UDP from UMP (UMPK route): step 1/1. Inhibited by UTP. Functionally, catalyzes the reversible phosphorylation of UMP to UDP. The protein is Uridylate kinase of Clavibacter michiganensis subsp. michiganensis (strain NCPPB 382).